Consider the following 179-residue polypeptide: Prion-like protein doppel (179 aa).

Residues 1 to 25 (MKNRLGTWWVAILCMLLASHLSTVK) form the signal peptide. Residues 27–50 (RGIKHRFKWNRKVLPSSGGQITEA) form a flexible tail region. Residues 51 to 155 (RVAENRPGAF…KHCDFWLERG (105 aa)) form a globular region. 2 disulfide bridges follow: Cys-95–Cys-148 and Cys-109–Cys-143. N-linked (GlcNAc...) asparagine glycosylation is found at Asn-99 and Asn-111. The segment at 125–142 (KQDSKLHQRVLWRLIKEI) is cu(2+) binding. The GPI-anchor amidated glycine moiety is linked to residue Gly-155. Positions 156–179 (AALRVAVDQPAMVCLLGFVWFIVK) are cleaved as a propeptide — removed in mature form.

This sequence belongs to the prion family. Post-translationally, N-glycosylated. N-glycosylated at two distinct sites. In terms of processing, O-glycosylated. In terms of tissue distribution, detected in testis. Detected within seminiferous tubules, on round and elongated spermatids (at protein level). Not detected in brain (at protein level). Detected in testis, and at low levels in heart. Expression in brain is very low and barely detectable.

The protein resides in the cell membrane. Required for normal acrosome reaction and for normal male fertility. Can bind Cu(2+). This chain is Prion-like protein doppel (Prnd), found in Mus musculus (Mouse).